The chain runs to 147 residues: Receptor activity-modifying protein 3 (147 aa).

The signal sequence occupies residues 1–22 (MKTPAQRLHLLPLLLLLCGECA). Over 23 to 112 (QVCGCNETGM…CTVDRTHWED (90 aa)) the chain is Extracellular. N28, N57, N70, and N102 each carry an N-linked (GlcNAc...) asparagine glycan. 2 cysteine pairs are disulfide-bonded: C39/C71 and C56/C103. A helical transmembrane segment spans residues 113–137 (PPDEVLIPLIAVPVVLTVAMAGLVV). The Cytoplasmic portion of the chain corresponds to 138–147 (WRSKHTDRLL).

The protein belongs to the RAMP family. Heterodimer of CALCRL and RAMP3; interaction induces allosteric modulation of CALCRL function and ligand specificity for adrenomedullin/ADM and intermedin/ADM2. Heterodimer of CALCR and RAMP3; interaction form the receptor complex AMYR3 for amylin/IAPP. Interacts with GPER1. As to expression, expressed predominantly in the testis, embryonic and adult brain and in kidney.

It localises to the cell membrane. Its subcellular location is the membrane. Its function is as follows. Accessory protein that interacts with and modulates the function of G-protein coupled receptors including calcitonin gene-related peptide type 1 receptor (CALCRL), calcitonin receptor (CALCR) and G-protein coupled estrogen receptor 1 (GPER1). Required for the transport of CALCRL and GPER1 receptors to the plasma membrane. Plays a role in cardioprotection by reducing cardiac hypertrophy and perivascular fibrosis in a GPER1-dependent manner. Together with CALCRL, form a receptor complex for adrenomedullin/ADM and intermedin/ADM2. Together with CALCR, act as a receptor complex for amylin/IAPP. This is Receptor activity-modifying protein 3 from Mus musculus (Mouse).